Here is a 382-residue protein sequence, read N- to C-terminus: Probable G-protein coupled receptor 132 (382 aa).

Residues 1–42 (MRSEPTNAAGNTTLGVTSVLQSTSVPSSETCHVSYEESRVVL) lie on the Extracellular side of the membrane. N-linked (GlcNAc...) asparagine glycosylation occurs at Asn-11. A helical membrane pass occupies residues 43–65 (VVVYSAVCLLGLPANCLTAWLTL). Residues 66–76 (LQVLQRNVLAV) lie on the Cytoplasmic side of the membrane. The helical transmembrane segment at 77-99 (YLFCLSLCELLYISTVPLWIIYI) threads the bilayer. The Extracellular segment spans residues 100–113 (QNQHKWNLGPQACK). Cys-112 and Cys-184 are disulfide-bonded. Residues 114 to 135 (VTAYIFFCNIYISILLLCCISC) form a helical membrane-spanning segment. Residues 136–155 (DRYMAVVYALESRGHRHQRT) lie on the Cytoplasmic side of the membrane. The helical transmembrane segment at 156 to 175 (AVTISACVILLVGLVNYPVF) threads the bilayer. At 176 to 198 (DMKVEKSFCFEPLRMNSKIAGYH) the chain is on the extracellular side. A helical membrane pass occupies residues 199-221 (YLRFTFGFAIPLGILAFTNHQIF). Over 222–241 (RSIKLSDSLSAAQKNKVKRS) the chain is Cytoplasmic. Residues 242–261 (AIAVVTIFLVCFAPYHVVLL) traverse the membrane as a helical segment. Residues 262-286 (VKAASFSFYQGDMDAVCAFESRLYT) are Extracellular-facing. A helical membrane pass occupies residues 287-309 (VSMVFLCLSTVNSVADPIIYVLG). Residues 310-382 (TDHSRQEVSR…SPERLPEELC (73 aa)) are Cytoplasmic-facing.

It belongs to the G-protein coupled receptor 1 family. Highly expressed in hematopoietic tissues rich in lymphocytes like spleen and thymus. Weakly expressed in heart and lung. Highly expressed in infiltrating macrophages within atherosclerotic lesions.

The protein resides in the cell membrane. Functionally, may be a receptor for oxidized free fatty acids derived from linoleic and arachidonic acids such as 9-hydroxyoctadecadienoic acid (9-HODE). Activates a G alpha protein, most likely G alpha(q). May be involved in apoptosis. Functions at the G2/M checkpoint to delay mitosis. May function as a sensor that monitors the oxidative states and mediates appropriate cellular responses such as secretion of paracrine signals and attenuation of proliferation. May mediate ths accumulation of intracellular inositol phosphates at acidic pH through proton-sensing activity. The sequence is that of Probable G-protein coupled receptor 132 (Gpr132) from Mus musculus (Mouse).